The primary structure comprises 609 residues: Glutamine--fructose-6-phosphate aminotransferase [isomerizing] (609 aa).

Cysteine 2 functions as the Nucleophile; for GATase activity in the catalytic mechanism. The Glutamine amidotransferase type-2 domain occupies 2–217 (CGIVGAIAGR…DGDTAEIRRD (216 aa)). SIS domains lie at 285–425 (AESV…LRGA) and 458–599 (WAEC…VDKP). The For Fru-6P isomerization activity role is filled by lysine 604.

Homodimer.

The protein resides in the cytoplasm. It catalyses the reaction D-fructose 6-phosphate + L-glutamine = D-glucosamine 6-phosphate + L-glutamate. Its function is as follows. Catalyzes the first step in hexosamine metabolism, converting fructose-6P into glucosamine-6P using glutamine as a nitrogen source. The sequence is that of Glutamine--fructose-6-phosphate aminotransferase [isomerizing] from Xylella fastidiosa (strain Temecula1 / ATCC 700964).